Consider the following 234-residue polypeptide: Ribonuclease 3 (234 aa).

Residues 6-134 (RKSLEERVGH…IVGALYLDGG (129 aa)) enclose the RNase III domain. A Mg(2+)-binding site is contributed by glutamate 47. The active site involves aspartate 51. Mg(2+) is bound by residues serine 120 and glutamate 123. Residue glutamate 123 is part of the active site. Positions 162–231 (DYKTRLQELV…AKNALEMKYK (70 aa)) constitute a DRBM domain.

This sequence belongs to the ribonuclease III family. As to quaternary structure, homodimer. It depends on Mg(2+) as a cofactor.

The protein localises to the cytoplasm. It catalyses the reaction Endonucleolytic cleavage to 5'-phosphomonoester.. Digests double-stranded RNA. Involved in the processing of primary rRNA transcript to yield the immediate precursors to the large and small rRNAs (23S and 16S). Processes some mRNAs, and tRNAs when they are encoded in the rRNA operon. Processes pre-crRNA and tracrRNA of type II CRISPR loci if present in the organism. This is Ribonuclease 3 from Bdellovibrio bacteriovorus (strain ATCC 15356 / DSM 50701 / NCIMB 9529 / HD100).